The following is a 521-amino-acid chain: Probable glycine dehydrogenase (decarboxylating) subunit 2 (521 aa).

Position 279 is an N6-(pyridoxal phosphate)lysine (K279).

Belongs to the GcvP family. C-terminal subunit subfamily. The glycine cleavage system is composed of four proteins: P, T, L and H. In this organism, the P 'protein' is a heterodimer of two subunits. The cofactor is pyridoxal 5'-phosphate.

The enzyme catalyses N(6)-[(R)-lipoyl]-L-lysyl-[glycine-cleavage complex H protein] + glycine + H(+) = N(6)-[(R)-S(8)-aminomethyldihydrolipoyl]-L-lysyl-[glycine-cleavage complex H protein] + CO2. Functionally, the glycine cleavage system catalyzes the degradation of glycine. The P protein binds the alpha-amino group of glycine through its pyridoxal phosphate cofactor; CO(2) is released and the remaining methylamine moiety is then transferred to the lipoamide cofactor of the H protein. This is Probable glycine dehydrogenase (decarboxylating) subunit 2 from Staphylothermus marinus (strain ATCC 43588 / DSM 3639 / JCM 9404 / F1).